Here is a 170-residue protein sequence, read N- to C-terminus: Pollen-specific protein C13 (170 aa).

An N-terminal signal peptide occupies residues 1-27; the sequence is MASVPAPATTTAAVILCLCVVLSCAAA. Disulfide bonds link C43/C114, C46/C155, and C67/C102. The N-linked (GlcNAc...) asparagine glycan is linked to N53.

The protein belongs to the Ole e I family. Pollen.

The polypeptide is Pollen-specific protein C13 (MGS1) (Zea mays (Maize)).